The following is a 403-amino-acid chain: Sulfate adenylyltransferase (403 aa).

This sequence belongs to the sulfate adenylyltransferase family.

It carries out the reaction sulfate + ATP + H(+) = adenosine 5'-phosphosulfate + diphosphate. Its pathway is sulfur metabolism; hydrogen sulfide biosynthesis; sulfite from sulfate: step 1/3. The sequence is that of Sulfate adenylyltransferase from Pelodictyon phaeoclathratiforme (strain DSM 5477 / BU-1).